Reading from the N-terminus, the 472-residue chain is 2-amino-4-ketopentanoate thiolase beta subunit (472 aa).

Lys102 bears the N6-(pyridoxal phosphate)lysine mark. Residues Asn128 and 238 to 242 (AGGGN) contribute to the pyridoxal 5'-phosphate site.

Belongs to the threonine synthase family. As to quaternary structure, heterodimer with OrtA. Requires pyridoxal 5'-phosphate as cofactor.

The enzyme catalyses D-alanine + acetyl-CoA = (2R)-2-amino-4-oxopentanoate + CoA. In terms of biological role, involved in the ornithine fermentation pathway. Catalyzes the thiolytic cleavage of 2-amino-4-ketopentanoate (AKP) with coenzyme A (CoA) to form acetyl-CoA and alanine. It is strictly specific for AKP. This is 2-amino-4-ketopentanoate thiolase beta subunit from Unknown prokaryotic organism.